A 485-amino-acid polypeptide reads, in one-letter code: Glycogen synthase (485 aa).

K15 is a binding site for ADP-alpha-D-glucose.

The protein belongs to the glycosyltransferase 1 family. Bacterial/plant glycogen synthase subfamily.

It catalyses the reaction [(1-&gt;4)-alpha-D-glucosyl](n) + ADP-alpha-D-glucose = [(1-&gt;4)-alpha-D-glucosyl](n+1) + ADP + H(+). It participates in glycan biosynthesis; glycogen biosynthesis. Its function is as follows. Synthesizes alpha-1,4-glucan chains using ADP-glucose. The protein is Glycogen synthase of Fervidobacterium nodosum (strain ATCC 35602 / DSM 5306 / Rt17-B1).